Reading from the N-terminus, the 326-residue chain is Type II methyltransferase M.CviAII (326 aa).

This sequence belongs to the N(4)/N(6)-methyltransferase family.

It catalyses the reaction a 2'-deoxyadenosine in DNA + S-adenosyl-L-methionine = an N(6)-methyl-2'-deoxyadenosine in DNA + S-adenosyl-L-homocysteine + H(+). An alpha subtype methylase that recognizes the double-stranded sequence 5'-CATG-3', methylates A-2 on both strands and protects the DNA from cleavage by the CviAII endonuclease. This Paramecium bursaria Chlorella virus 1 (PBCV-1) protein is Type II methyltransferase M.CviAII (CVIAIIM).